We begin with the raw amino-acid sequence, 378 residues long: Sperm microtubule associated protein 2 (378 aa).

Disordered stretches follow at residues 1–35 (MGEL…SDGS) and 47–79 (WLQS…LPEV). Over residues 47–56 (WLQSSQATTE) the composition is skewed to polar residues. Over residues 61-77 (DPEEEIPPEEMVGEELP) the composition is skewed to acidic residues. 7 THEG repeats span residues 113–132 (AKCR…PKFN), 179–198 (TITV…PKRF), 217–236 (STLE…PKIR), 253–272 (AAQM…PRAP), 285–304 (PKPY…PKAL), 321–340 (VTKN…PKIR), and 355–374 (ASLV…PKHI). At S290 the chain carries Phosphoserine.

As to quaternary structure, interacts with CCT5.

It is found in the nucleus. May be involved (but not essential) in spermatogenesis. The chain is Sperm microtubule associated protein 2 from Rattus norvegicus (Rat).